A 323-amino-acid polypeptide reads, in one-letter code: Beta-ketoacyl-[acyl-carrier-protein] synthase III (323 aa).

Residues C113 and H250 contribute to the active site. Residues 251 to 255 (QANRR) are ACP-binding. N280 is an active-site residue.

This sequence belongs to the thiolase-like superfamily. FabH family. In terms of assembly, homodimer.

Its subcellular location is the cytoplasm. The enzyme catalyses malonyl-[ACP] + acetyl-CoA + H(+) = 3-oxobutanoyl-[ACP] + CO2 + CoA. It functions in the pathway lipid metabolism; fatty acid biosynthesis. Functionally, catalyzes the condensation reaction of fatty acid synthesis by the addition to an acyl acceptor of two carbons from malonyl-ACP. Catalyzes the first condensation reaction which initiates fatty acid synthesis and may therefore play a role in governing the total rate of fatty acid production. Possesses both acetoacetyl-ACP synthase and acetyl transacylase activities. Its substrate specificity determines the biosynthesis of branched-chain and/or straight-chain of fatty acids. This Allorhizobium ampelinum (strain ATCC BAA-846 / DSM 112012 / S4) (Agrobacterium vitis (strain S4)) protein is Beta-ketoacyl-[acyl-carrier-protein] synthase III.